The sequence spans 39 residues: Cytochrome b559 subunit beta (39 aa).

A helical membrane pass occupies residues 14 to 30; sequence WLAVHGLAVPTVFFLGS. Histidine 18 contacts heme.

This sequence belongs to the PsbE/PsbF family. As to quaternary structure, heterodimer of an alpha subunit and a beta subunit. PSII is composed of 1 copy each of membrane proteins PsbA, PsbB, PsbC, PsbD, PsbE, PsbF, PsbH, PsbI, PsbJ, PsbK, PsbL, PsbM, PsbT, PsbX, PsbY, PsbZ, Psb30/Ycf12, at least 3 peripheral proteins of the oxygen-evolving complex and a large number of cofactors. It forms dimeric complexes. It depends on heme b as a cofactor.

It localises to the plastid. Its subcellular location is the chloroplast thylakoid membrane. Its function is as follows. This b-type cytochrome is tightly associated with the reaction center of photosystem II (PSII). PSII is a light-driven water:plastoquinone oxidoreductase that uses light energy to abstract electrons from H(2)O, generating O(2) and a proton gradient subsequently used for ATP formation. It consists of a core antenna complex that captures photons, and an electron transfer chain that converts photonic excitation into a charge separation. The polypeptide is Cytochrome b559 subunit beta (Pinus koraiensis (Korean pine)).